Consider the following 295-residue polypeptide: Ribosomal protein L11 methyltransferase (295 aa).

Positions 146, 167, 189, and 231 each coordinate S-adenosyl-L-methionine.

Belongs to the methyltransferase superfamily. PrmA family.

The protein resides in the cytoplasm. The catalysed reaction is L-lysyl-[protein] + 3 S-adenosyl-L-methionine = N(6),N(6),N(6)-trimethyl-L-lysyl-[protein] + 3 S-adenosyl-L-homocysteine + 3 H(+). Methylates ribosomal protein L11. The protein is Ribosomal protein L11 methyltransferase of Vibrio cholerae serotype O1 (strain ATCC 39541 / Classical Ogawa 395 / O395).